A 393-amino-acid polypeptide reads, in one-letter code: Lipid-A-disaccharide synthase (393 aa).

This sequence belongs to the LpxB family.

It catalyses the reaction a lipid X + a UDP-2-N,3-O-bis[(3R)-3-hydroxyacyl]-alpha-D-glucosamine = a lipid A disaccharide + UDP + H(+). It participates in bacterial outer membrane biogenesis; LPS lipid A biosynthesis. Functionally, condensation of UDP-2,3-diacylglucosamine and 2,3-diacylglucosamine-1-phosphate to form lipid A disaccharide, a precursor of lipid A, a phosphorylated glycolipid that anchors the lipopolysaccharide to the outer membrane of the cell. This is Lipid-A-disaccharide synthase from Actinobacillus pleuropneumoniae serotype 7 (strain AP76).